The following is a 561-amino-acid chain: Arginine--tRNA ligase (561 aa).

Positions 119–129 match the 'HIGH' region motif; it reads PNIAKPMSMGH.

The protein belongs to the class-I aminoacyl-tRNA synthetase family. In terms of assembly, monomer.

The protein resides in the cytoplasm. It catalyses the reaction tRNA(Arg) + L-arginine + ATP = L-arginyl-tRNA(Arg) + AMP + diphosphate. The sequence is that of Arginine--tRNA ligase from Lactobacillus acidophilus (strain ATCC 700396 / NCK56 / N2 / NCFM).